Here is a 184-residue protein sequence, read N- to C-terminus: Tumor protein D52 (184 aa).

The disordered stretch occupies residues 1–43 (MDRGEQGLLRTDTVPEEAEDAAATISATETLSEEEQEELRREL). Positions 22–74 (AATISATETLSEEEQEELRRELAKVEEEIQTLSQVLAAREKHLAEIKRKLGIN) form a coiled coil. The residue at position 136 (serine 136) is a Phosphoserine. The segment at 147–184 (KVGGTKPAGGDFGEVLNSTANASATSGEPVPEQTQEGL) is disordered. Positions 162–184 (LNSTANASATSGEPVPEQTQEGL) are enriched in polar residues.

Belongs to the TPD52 family. In terms of assembly, forms a homodimer or heterodimer with other members of the family. In terms of processing, phosphorylated in a calcium/calmodulin-dependent manner.

In Oryctolagus cuniculus (Rabbit), this protein is Tumor protein D52 (TPD52).